The following is a 206-amino-acid chain: Imidazoleglycerol-phosphate dehydratase (206 aa).

The tract at residues 1 to 21 (MTALDSSRLLQPRTASVHRRT) is disordered.

Belongs to the imidazoleglycerol-phosphate dehydratase family.

The protein localises to the cytoplasm. The catalysed reaction is D-erythro-1-(imidazol-4-yl)glycerol 3-phosphate = 3-(imidazol-4-yl)-2-oxopropyl phosphate + H2O. Its pathway is amino-acid biosynthesis; L-histidine biosynthesis; L-histidine from 5-phospho-alpha-D-ribose 1-diphosphate: step 6/9. This is Imidazoleglycerol-phosphate dehydratase from Synechococcus sp. (strain JA-2-3B'a(2-13)) (Cyanobacteria bacterium Yellowstone B-Prime).